We begin with the raw amino-acid sequence, 360 residues long: Phospho-N-acetylmuramoyl-pentapeptide-transferase (360 aa).

The next 10 membrane-spanning stretches (helical) occupy residues 26-46 (GVLA…FFIA), 70-90 (GTPT…TLLW), 94-114 (GNPL…IGFV), 136-156 (LQSL…SNPV), 164-184 (FIPH…YFVI), 199-219 (GLAI…AYVS), 236-256 (SGQM…FLWF), 263-283 (VFMG…VAIV), 289-309 (VLFI…IQVV), and 339-359 (AVRF…SLKI).

The protein belongs to the glycosyltransferase 4 family. MraY subfamily. Requires Mg(2+) as cofactor.

The protein resides in the cell inner membrane. It catalyses the reaction UDP-N-acetyl-alpha-D-muramoyl-L-alanyl-gamma-D-glutamyl-meso-2,6-diaminopimeloyl-D-alanyl-D-alanine + di-trans,octa-cis-undecaprenyl phosphate = di-trans,octa-cis-undecaprenyl diphospho-N-acetyl-alpha-D-muramoyl-L-alanyl-D-glutamyl-meso-2,6-diaminopimeloyl-D-alanyl-D-alanine + UMP. It participates in cell wall biogenesis; peptidoglycan biosynthesis. In terms of biological role, catalyzes the initial step of the lipid cycle reactions in the biosynthesis of the cell wall peptidoglycan: transfers peptidoglycan precursor phospho-MurNAc-pentapeptide from UDP-MurNAc-pentapeptide onto the lipid carrier undecaprenyl phosphate, yielding undecaprenyl-pyrophosphoryl-MurNAc-pentapeptide, known as lipid I. The chain is Phospho-N-acetylmuramoyl-pentapeptide-transferase from Acidithiobacillus ferrooxidans (strain ATCC 23270 / DSM 14882 / CIP 104768 / NCIMB 8455) (Ferrobacillus ferrooxidans (strain ATCC 23270)).